A 353-amino-acid polypeptide reads, in one-letter code: O-antigen biosynthesis glycosyltransferase WclY (353 aa).

Residues 116 to 136 (SLIWGLLWCSIWLFFDKLVIL) form a helical membrane-spanning segment. Asparagine 190 and glutamate 271 together coordinate UDP. The E(x7)E glycosyltransferase motif signature appears at 263 to 271 (EGFGLTVLE).

Belongs to the glycosyltransferase group 1 family. Glycosyltransferase 4 subfamily.

The protein resides in the membrane. The protein operates within bacterial outer membrane biogenesis; LPS O-antigen biosynthesis. Its function is as follows. Involved in the assembly of the O-repeating unit during O-antigen biosynthesis. N-acetylglucosamine transferase accountable for the alpha-D-GlcNAc-1,4-beta-D-Gal linkage within the O-antigen. In Escherichia coli, this protein is O-antigen biosynthesis glycosyltransferase WclY.